Reading from the N-terminus, the 434-residue chain is Cytochrome P450 144 (434 aa).

Asp124 and His128 together coordinate substrate. Heme-binding residues include Arg132, Arg326, His383, and Cys385.

This sequence belongs to the cytochrome P450 family. As to quaternary structure, monomer. Heme serves as cofactor.

The sequence is that of Cytochrome P450 144 (cyp144) from Mycobacterium tuberculosis (strain CDC 1551 / Oshkosh).